We begin with the raw amino-acid sequence, 258 residues long: Type III pantothenate kinase (258 aa).

12–19 (DIGNTSIA) provides a ligand contact to ATP. Substrate-binding positions include Tyr94 and 109–112 (GSDV). Catalysis depends on Asp111, which acts as the Proton acceptor. K(+) is bound at residue Asp132. An ATP-binding site is contributed by Thr135. Residue Thr187 participates in substrate binding.

The protein belongs to the type III pantothenate kinase family. As to quaternary structure, homodimer. NH4(+) is required as a cofactor. K(+) serves as cofactor.

The protein localises to the cytoplasm. It catalyses the reaction (R)-pantothenate + ATP = (R)-4'-phosphopantothenate + ADP + H(+). The protein operates within cofactor biosynthesis; coenzyme A biosynthesis; CoA from (R)-pantothenate: step 1/5. Functionally, catalyzes the phosphorylation of pantothenate (Pan), the first step in CoA biosynthesis. This is Type III pantothenate kinase from Borreliella afzelii (strain PKo) (Borrelia afzelii).